A 146-amino-acid chain; its full sequence is Putative pre-16S rRNA nuclease (146 aa).

This sequence belongs to the YqgF nuclease family.

The protein localises to the cytoplasm. Its function is as follows. Could be a nuclease involved in processing of the 5'-end of pre-16S rRNA. The polypeptide is Putative pre-16S rRNA nuclease (Paraburkholderia xenovorans (strain LB400)).